Here is a 286-residue protein sequence, read N- to C-terminus: MKNVLSIQSHVIYGHAGNSAAVFPMQRLGINVWPLNTVQLSNHMQYGHWAGSAIDAAKMEQLVDGIAAIGVLKRCDAVLSGFLGSPPQARAAVEIVRTVKAMNPNAWYFCDPAMGQTGGIRPEPGVEEFIVEEVPALADGMSPNHTELQKLAGRRIETVAEAVDACRALIRRGPQIILVKHLHDRNSPADRFNMLAVTETEAWIGQRPLYAFPRHPVGVGDLTSAIFVACRLRGDSVRAAFEHTLAAVHAVVKATYDARRYELELVAAQDEIARPSEWFGAWVTDA.

Substrate is bound by residues Ser-9 and 44–45 (MQ). Positions 111, 147, and 180 each coordinate ATP. Residue Asp-221 participates in substrate binding.

This sequence belongs to the pyridoxine kinase family. PdxY subfamily. In terms of assembly, homodimer. The cofactor is Mg(2+).

The enzyme catalyses pyridoxal + ATP = pyridoxal 5'-phosphate + ADP + H(+). The protein operates within cofactor metabolism; pyridoxal 5'-phosphate salvage; pyridoxal 5'-phosphate from pyridoxal: step 1/1. In terms of biological role, pyridoxal kinase involved in the salvage pathway of pyridoxal 5'-phosphate (PLP). Catalyzes the phosphorylation of pyridoxal to PLP. The sequence is that of Pyridoxal kinase PdxY from Burkholderia orbicola (strain AU 1054).